We begin with the raw amino-acid sequence, 174 residues long: Co-chaperone protein HscB (174 aa).

The region spanning 2–74 is the J domain; the sequence is DYFTLFGLPA…LKRAEYMLSL (73 aa).

The protein belongs to the HscB family. Interacts with HscA and stimulates its ATPase activity. Interacts with IscU.

Co-chaperone involved in the maturation of iron-sulfur cluster-containing proteins. Seems to help targeting proteins to be folded toward HscA. In Yersinia pestis bv. Antiqua (strain Antiqua), this protein is Co-chaperone protein HscB.